Reading from the N-terminus, the 91-residue chain is Small ribosomal subunit protein uS19 (91 aa).

It belongs to the universal ribosomal protein uS19 family.

Functionally, protein S19 forms a complex with S13 that binds strongly to the 16S ribosomal RNA. The sequence is that of Small ribosomal subunit protein uS19 from Bordetella bronchiseptica (strain ATCC BAA-588 / NCTC 13252 / RB50) (Alcaligenes bronchisepticus).